The sequence spans 173 residues: Mediator of RNA polymerase II transcription subunit 19 (173 aa).

The segment at 139–173 (LMRGDDMSENDEFGARRSKRKKKAQNGTDSKRQHI) is disordered.

The protein belongs to the Mediator complex subunit 19 family. In terms of assembly, component of the Mediator complex.

It localises to the nucleus. Component of the Mediator complex, a coactivator involved in the regulated transcription of nearly all RNA polymerase II-dependent genes. Mediator functions as a bridge to convey information from gene-specific regulatory proteins to the basal RNA polymerase II transcription machinery. Mediator is recruited to promoters by direct interactions with regulatory proteins and serves as a scaffold for the assembly of a functional preinitiation complex with RNA polymerase II and the general transcription factors. The protein is Mediator of RNA polymerase II transcription subunit 19 (ROX3) of Scheffersomyces stipitis (strain ATCC 58785 / CBS 6054 / NBRC 10063 / NRRL Y-11545) (Yeast).